The following is a 285-amino-acid chain: Biotin synthase (285 aa).

Residues 2 to 223 (STRKQIFLCA…RRAHTLLGED (222 aa)) form the Radical SAM core domain. 3 residues coordinate [4Fe-4S] cluster: C20, C24, and C27. 3 residues coordinate [2Fe-2S] cluster: C64, C99, and C157.

The protein belongs to the radical SAM superfamily. Biotin synthase family. Homodimer. [4Fe-4S] cluster serves as cofactor. [2Fe-2S] cluster is required as a cofactor.

It carries out the reaction (4R,5S)-dethiobiotin + (sulfur carrier)-SH + 2 reduced [2Fe-2S]-[ferredoxin] + 2 S-adenosyl-L-methionine = (sulfur carrier)-H + biotin + 2 5'-deoxyadenosine + 2 L-methionine + 2 oxidized [2Fe-2S]-[ferredoxin]. It functions in the pathway cofactor biosynthesis; biotin biosynthesis; biotin from 7,8-diaminononanoate: step 2/2. In terms of biological role, catalyzes the conversion of dethiobiotin (DTB) to biotin by the insertion of a sulfur atom into dethiobiotin via a radical-based mechanism. In Sulfurovum sp. (strain NBC37-1), this protein is Biotin synthase.